The chain runs to 333 residues: tRNA N6-adenosine threonylcarbamoyltransferase (333 aa).

His-111 and His-115 together coordinate Fe cation. Substrate-binding positions include 134 to 138, Asp-167, Gly-180, and Asn-273; that span reads LASGG. Asp-301 is a Fe cation binding site.

It belongs to the KAE1 / TsaD family. Fe(2+) serves as cofactor.

The protein localises to the cytoplasm. It catalyses the reaction L-threonylcarbamoyladenylate + adenosine(37) in tRNA = N(6)-L-threonylcarbamoyladenosine(37) in tRNA + AMP + H(+). Functionally, required for the formation of a threonylcarbamoyl group on adenosine at position 37 (t(6)A37) in tRNAs that read codons beginning with adenine. Is involved in the transfer of the threonylcarbamoyl moiety of threonylcarbamoyl-AMP (TC-AMP) to the N6 group of A37, together with TsaE and TsaB. TsaD likely plays a direct catalytic role in this reaction. This Desulforapulum autotrophicum (strain ATCC 43914 / DSM 3382 / VKM B-1955 / HRM2) (Desulfobacterium autotrophicum) protein is tRNA N6-adenosine threonylcarbamoyltransferase.